Reading from the N-terminus, the 105-residue chain is Large ribosomal subunit protein uL24 (105 aa).

The disordered stretch occupies residues Asp75–Ile105. Over residues Arg94–Ile105 the composition is skewed to basic residues.

It belongs to the universal ribosomal protein uL24 family. In terms of assembly, part of the 50S ribosomal subunit.

In terms of biological role, one of two assembly initiator proteins, it binds directly to the 5'-end of the 23S rRNA, where it nucleates assembly of the 50S subunit. Its function is as follows. One of the proteins that surrounds the polypeptide exit tunnel on the outside of the subunit. The chain is Large ribosomal subunit protein uL24 from Rhodococcus jostii (strain RHA1).